A 292-amino-acid chain; its full sequence is WRKY transcription factor 55 (292 aa).

The disordered stretch occupies residues 133-155 (VERSGASGSSTPRQRRRKDEGEE). Residues 167–235 (NTDLPPDDNH…YRGSHTCYNS (69 aa)) constitute a DNA-binding region (WRKY).

Belongs to the WRKY group III family.

It is found in the nucleus. Its function is as follows. Transcription factor. Interacts specifically with the W box (5'-(T)TGAC[CT]-3'), a frequently occurring elicitor-responsive cis-acting element. The sequence is that of WRKY transcription factor 55 (WRKY55) from Arabidopsis thaliana (Mouse-ear cress).